The following is a 305-amino-acid chain: NAD-dependent protein deacylase sirtuin-5, mitochondrial (305 aa).

Residues 1-32 constitute a mitochondrion transit peptide; it reads MIVRQLWCSRGSTSHLCAAVRLNWRSPKMTRP. One can recognise a Deacetylase sirtuin-type domain in the interval 33-303; it reads SSDLTAFREH…PPALERHESE (271 aa). Residue 54–73 coordinates NAD(+); it reads GAGVSAESGVPTFRGPGGFW. Residues Y98 and R101 each coordinate substrate. 136–139 lines the NAD(+) pocket; it reads QNID. The Proton acceptor role is filled by H154. Residues C162, C165, C203, and C208 each contribute to the Zn(2+) site. NAD(+) is bound by residues 245-247, 271-273, and C289; these read GTS and NME.

This sequence belongs to the sirtuin family. Class III subfamily. It depends on Zn(2+) as a cofactor.

Its subcellular location is the mitochondrion. The protein resides in the cytoplasm. The protein localises to the cytosol. It localises to the nucleus. It carries out the reaction N(6)-malonyl-L-lysyl-[protein] + NAD(+) + H2O = 2''-O-malonyl-ADP-D-ribose + nicotinamide + L-lysyl-[protein]. It catalyses the reaction N(6)-succinyl-L-lysyl-[protein] + NAD(+) + H2O = 2''-O-succinyl-ADP-D-ribose + nicotinamide + L-lysyl-[protein]. The enzyme catalyses N(6)-glutaryl-L-lysyl-[protein] + NAD(+) + H2O = 2''-O-glutaryl-ADP-D-ribose + nicotinamide + L-lysyl-[protein]. Functionally, NAD-dependent lysine demalonylase, desuccinylase and deglutarylase that specifically removes malonyl, succinyl and glutaryl groups on target proteins. Has weak NAD-dependent protein deacetylase activity; however this activity may not be physiologically relevant in vivo. This is NAD-dependent protein deacylase sirtuin-5, mitochondrial (sirt5) from Danio rerio (Zebrafish).